We begin with the raw amino-acid sequence, 827 residues long: SH3-containing GRB2-like protein 3-interacting protein 1 (827 aa).

3 disordered regions span residues 1–115 (MMEG…ESHK), 142–205 (SIGN…GPPL), and 223–278 (IWGS…QAAT). 2 stretches are compositionally biased toward basic and acidic residues: residues 16 to 32 (RKKEKDTDSTGSPDRDG) and 40 to 54 (PPYHSKAECAREGGK). Phosphoserine occurs at positions 78, 104, 105, 107, 149, 151, 156, and 169. Phosphothreonine is present on residues Thr180 and Thr182. A Phosphoserine modification is found at Ser236. Pro residues predominate over residues 245 to 260 (TGTPPPLPPKAVPATP). A phosphothreonine mark is found at Thr247 and Thr259. A phosphoserine mark is found at Ser265, Ser287, Ser289, Ser300, Ser316, and Ser319. Residues 265 to 276 (SPLTVATGNDQA) show a composition bias toward polar residues. Residues 314 to 333 (HFSDASPEHVTPELTPREKV) are compositionally biased toward basic and acidic residues. The interval 314–523 (HFSDASPEHV…LSAATTPTVE (210 aa)) is disordered. Residues Thr324, Thr328, and Thr335 each carry the phosphothreonine modification. The span at 336 to 345 (PPAASDIPAD) shows a compositional bias: low complexity. Positions 346–369 (SPAPGPPGPPGSAGPPGPPGPRHV) are enriched in pro residues. Phosphoserine is present on Ser371. Basic and acidic residues predominate over residues 377-392 (EVQKKVAEQTFIKDDY). Ser398 is subject to Phosphoserine. A Phosphothreonine modification is found at Thr409. The span at 436–455 (ASGASSPARPATPLVPCSST) shows a compositional bias: low complexity. Over residues 456-474 (TPPPPPPRPPSRPKLPPGK) the composition is skewed to pro residues. Low complexity-rich tracts occupy residues 481–491 (SRPFSPPIHSS) and 498–521 (PLARAESTSSISSTNSLSAATTPT). Ser485 carries the phosphoserine modification. Residues 558–826 (TLPVAAAFTE…RFAAGKYLAD (269 aa)) enclose the MHD domain. 4 interaction with DPF motifs-containing proteins regions span residues 560–566 (PVAAAFT), 592–594 (SFP), 666–669 (TYYN), and 812–817 (SLIKKR). Residues 648 to 827 (MPNLMTHLKK…FAAGKYLADN (180 aa)) form a necessary and sufficient to mediate interaction with CANX region.

In terms of assembly, interacts with proteins essential or regulating the formation of functional clathrin-coated pits. Interacts with CANX. Interacts with AP2A1. Interacts with EPS15. Interacts with SH3GL3. Interacts with AMPH. Interacts with ITSN1 (via SH3 domains). Interacts with and REPS1. Specifically expressed in brain (at protein level).

It is found in the membrane. It localises to the clathrin-coated pit. Its function is as follows. May function in clathrin-mediated endocytosis. Has both a membrane binding/tubulating activity and the ability to recruit proteins essential to the formation of functional clathrin-coated pits. Has a preference for membranes enriched in phosphatidylserine and phosphoinositides and is required for the endocytosis of the transferrin receptor. May also bind tubulin. May play a role in the regulation of energy homeostasis. This chain is SH3-containing GRB2-like protein 3-interacting protein 1 (Sgip1), found in Rattus norvegicus (Rat).